The primary structure comprises 217 residues: Octanoyltransferase (217 aa).

The BPL/LPL catalytic domain maps to 31 to 206; sequence KSVMDEAWLL…ELVSRLGYAE (176 aa). Substrate contacts are provided by residues 70-77, 137-139, and 150-152; these read RGGQVTYH, SLG, and GLA. Residue Cys168 is the Acyl-thioester intermediate of the active site.

It belongs to the LipB family.

It localises to the cytoplasm. The catalysed reaction is octanoyl-[ACP] + L-lysyl-[protein] = N(6)-octanoyl-L-lysyl-[protein] + holo-[ACP] + H(+). It participates in protein modification; protein lipoylation via endogenous pathway; protein N(6)-(lipoyl)lysine from octanoyl-[acyl-carrier-protein]: step 1/2. Catalyzes the transfer of endogenously produced octanoic acid from octanoyl-acyl-carrier-protein onto the lipoyl domains of lipoate-dependent enzymes. Lipoyl-ACP can also act as a substrate although octanoyl-ACP is likely to be the physiological substrate. This chain is Octanoyltransferase, found in Pseudomonas aeruginosa (strain UCBPP-PA14).